We begin with the raw amino-acid sequence, 295 residues long: Glycine N-phenylacetyltransferase (295 aa).

An N6-acetyllysine modification is found at K43. K48 is modified (N6-acetyllysine; alternate). The residue at position 48 (K48) is an N6-succinyllysine; alternate. An N6-acetyllysine modification is found at K80. K182 carries the post-translational modification N6-acetyllysine; alternate. The residue at position 182 (K182) is an N6-succinyllysine; alternate.

This sequence belongs to the glycine N-acyltransferase family.

It localises to the mitochondrion. It catalyses the reaction phenylacetyl-CoA + glycine = phenylacetylglycine + CoA + H(+). Mitochondrial acyltransferase which transfers the acyl group to the N-terminus of glycine. Can conjugate a multitude of substrates to form a variety of N-acylglycines. Catalyzes the conjugation of arylacetic acids with glycine but does not have activity towards any alkyl-CoA. This is Glycine N-phenylacetyltransferase from Bos taurus (Bovine).